We begin with the raw amino-acid sequence, 425 residues long: Serine/threonine transporter SstT (425 aa).

9 helical membrane passes run 11–31 (FLNGSLVLQIVIGIVAGLILA), 43–63 (FLGSLFVSALKAVAPILVFVL), 91–111 (LFAASTAVMVSYFFPTTLVLV), 141–161 (ALVSGNFIGILAWAAGLGFAL), 182–202 (IVHLVIRFAPLGIFGLVAGTI), 216–236 (LLAVLLGCMILIALVINPIIV), 290–310 (IPLGATINMAGASITITVLTL), 316–336 (LGIEFDIATAILLSVVAAVSA), and 363–383 (VAMQVVAIGFIIGVVQDSAET).

Belongs to the dicarboxylate/amino acid:cation symporter (DAACS) (TC 2.A.23) family.

It localises to the cell inner membrane. It carries out the reaction L-serine(in) + Na(+)(in) = L-serine(out) + Na(+)(out). It catalyses the reaction L-threonine(in) + Na(+)(in) = L-threonine(out) + Na(+)(out). Involved in the import of serine and threonine into the cell, with the concomitant import of sodium (symport system). This Psychromonas ingrahamii (strain DSM 17664 / CCUG 51855 / 37) protein is Serine/threonine transporter SstT.